Reading from the N-terminus, the 175-residue chain is Large ribosomal subunit protein uL10 (175 aa).

It belongs to the universal ribosomal protein uL10 family. In terms of assembly, part of the ribosomal stalk of the 50S ribosomal subunit. The N-terminus interacts with L11 and the large rRNA to form the base of the stalk. The C-terminus forms an elongated spine to which L12 dimers bind in a sequential fashion forming a multimeric L10(L12)X complex.

Functionally, forms part of the ribosomal stalk, playing a central role in the interaction of the ribosome with GTP-bound translation factors. The protein is Large ribosomal subunit protein uL10 of Cupriavidus taiwanensis (strain DSM 17343 / BCRC 17206 / CCUG 44338 / CIP 107171 / LMG 19424 / R1) (Ralstonia taiwanensis (strain LMG 19424)).